Here is a 162-residue protein sequence, read N- to C-terminus: Putative pre-16S rRNA nuclease (162 aa).

The protein belongs to the YqgF nuclease family.

Its subcellular location is the cytoplasm. In terms of biological role, could be a nuclease involved in processing of the 5'-end of pre-16S rRNA. This is Putative pre-16S rRNA nuclease from Brucella abortus (strain S19).